A 1419-amino-acid polypeptide reads, in one-letter code: DNA-directed RNA polymerase subunit beta' (1419 aa).

Residues Cys-71, Cys-73, Cys-86, and Cys-89 each contribute to the Zn(2+) site. Residues Asp-461, Asp-463, and Asp-465 each coordinate Mg(2+). Cys-815, Cys-889, Cys-896, and Cys-899 together coordinate Zn(2+).

The protein belongs to the RNA polymerase beta' chain family. In terms of assembly, the RNAP catalytic core consists of 2 alpha, 1 beta, 1 beta' and 1 omega subunit. When a sigma factor is associated with the core the holoenzyme is formed, which can initiate transcription. The cofactor is Mg(2+). Requires Zn(2+) as cofactor.

It catalyses the reaction RNA(n) + a ribonucleoside 5'-triphosphate = RNA(n+1) + diphosphate. Functionally, DNA-dependent RNA polymerase catalyzes the transcription of DNA into RNA using the four ribonucleoside triphosphates as substrates. The chain is DNA-directed RNA polymerase subunit beta' from Actinobacillus succinogenes (strain ATCC 55618 / DSM 22257 / CCUG 43843 / 130Z).